Reading from the N-terminus, the 239-residue chain is Transmembrane ascorbate ferrireductase 1 (239 aa).

Residues 1–7 are Cytoplasmic-facing; it reads MAVRINA. Residues 8–28 traverse the membrane as a helical segment; it reads MAVTFVAHALAVIAAIMVLVW. Residues 13-216 form the Cytochrome b561 domain; the sequence is VAHALAVIAA…FGAFVVLTAS (204 aa). Topologically, residues 29–45 are lumenal; it reads SISYRGGLAWEATNKNL. Residues 46–66 traverse the membrane as a helical segment; that stretch reads IFNLHPVLMLIGFIILGGEAI. His50 is a heme b binding site. Over 67–81 the chain is Cytoplasmic; the sequence is ISYKSLPLEKPVKKL. Residues 82-102 traverse the membrane as a helical segment; the sequence is IHLILHAIALALGIFGICAAF. Heme b is bound by residues His83 and His117. At 103 to 119 the chain is on the lumenal side; sequence KNHNESHIPNLYSLHSW. A helical transmembrane segment spans residues 120 to 140; sequence IGIGVISLYGFQWVYSFIVFF. At 141–155 the chain is on the cytoplasmic side; sequence FPGGSTNLKSGLLPW. His156 lines the heme b pocket. A helical transmembrane segment spans residues 156 to 176; sequence HAMLGLFVYILAVGNAALGFL. Over 177 to 193 the chain is Lumenal; that stretch reads EKLTFLENGGLDKYGSE. A helical transmembrane segment spans residues 194 to 214; the sequence is AFLINFTAIITILFGAFVVLT. Residues 215-239 are Cytoplasmic-facing; sequence ASAESPSPSPSVSNDDSVDFSYSAI. The segment at 217 to 239 is disordered; the sequence is AESPSPSPSVSNDDSVDFSYSAI. The segment covering 224-239 has biased composition (low complexity); the sequence is PSVSNDDSVDFSYSAI.

As to quaternary structure, homodimer. Heme b is required as a cofactor. As to expression, expressed in roots, seedlings and leaves. Lower expression in flowers. Expressed in the L1 layer of the shoot apex, in the epidermis of leaf primordia and young leaves and in vascular bundles. In the differentiation zone of the root, detected in the pericycle and in the epidermis, but not in the cortex. Strongly expressed in the lateral part of the root cap and in the epidermis of the root tip, but not in the meristematic tissue. Not expressed in lateral roots. In mature embryos, expressed in the epidermis, cotyledon tips and root tips.

It localises to the vacuole membrane. The catalysed reaction is Fe(3+)(out) + L-ascorbate(in) = monodehydro-L-ascorbate radical(in) + Fe(2+)(out) + H(+). Two-heme-containing cytochrome. Catalyzes ascorbate-dependent trans-membrane ferric-chelate reduction. Able to use dihydrolipoic acid (DHLA) as an alternative substrate to ascorbate. This Arabidopsis thaliana (Mouse-ear cress) protein is Transmembrane ascorbate ferrireductase 1 (CYB561A).